The following is a 346-amino-acid chain: Flap endonuclease 1 (346 aa).

Residues 1-102 (MGVTELGKLI…LEIEQRKKAK (102 aa)) form an N-domain region. 7 residues coordinate Mg(2+): Asp31, Asp84, Glu156, Glu158, Asp177, Asp179, and Asp239. The interval 120 to 261 (DVAKYAKRAI…KALKLIWEFG (142 aa)) is I-domain.

The protein belongs to the XPG/RAD2 endonuclease family. FEN1 subfamily. Interacts with PCNA. PCNA stimulates the nuclease activity without altering cleavage specificity. Requires Mg(2+) as cofactor.

Structure-specific nuclease with 5'-flap endonuclease and 5'-3' exonuclease activities involved in DNA replication and repair. During DNA replication, cleaves the 5'-overhanging flap structure that is generated by displacement synthesis when DNA polymerase encounters the 5'-end of a downstream Okazaki fragment. Binds the unpaired 3'-DNA end and kinks the DNA to facilitate 5' cleavage specificity. Cleaves one nucleotide into the double-stranded DNA from the junction in flap DNA, leaving a nick for ligation. Also involved in the base excision repair (BER) pathway. Acts as a genome stabilization factor that prevents flaps from equilibrating into structures that lead to duplications and deletions. Also possesses 5'-3' exonuclease activity on nicked or gapped double-stranded DNA. The protein is Flap endonuclease 1 of Pyrobaculum calidifontis (strain DSM 21063 / JCM 11548 / VA1).